A 384-amino-acid chain; its full sequence is Anhydro-N-acetylmuramic acid kinase (384 aa).

9-16 serves as a coordination point for ATP; it reads GTSYDAID.

Belongs to the anhydro-N-acetylmuramic acid kinase family.

It carries out the reaction 1,6-anhydro-N-acetyl-beta-muramate + ATP + H2O = N-acetyl-D-muramate 6-phosphate + ADP + H(+). It functions in the pathway amino-sugar metabolism; 1,6-anhydro-N-acetylmuramate degradation. Its pathway is cell wall biogenesis; peptidoglycan recycling. In terms of biological role, catalyzes the specific phosphorylation of 1,6-anhydro-N-acetylmuramic acid (anhMurNAc) with the simultaneous cleavage of the 1,6-anhydro ring, generating MurNAc-6-P. Is required for the utilization of anhMurNAc either imported from the medium or derived from its own cell wall murein, and thus plays a role in cell wall recycling. The sequence is that of Anhydro-N-acetylmuramic acid kinase from Streptomyces avermitilis (strain ATCC 31267 / DSM 46492 / JCM 5070 / NBRC 14893 / NCIMB 12804 / NRRL 8165 / MA-4680).